A 174-amino-acid polypeptide reads, in one-letter code: Superoxide dismutase [Cu-Zn] (174 aa).

Residues M1 to A23 form the signal peptide. Cu cation contacts are provided by H68, H70, and H86. A disulfide bridge links C75 with C170. Zn(2+) contacts are provided by H86, H95, D104, and D107. H150 lines the Cu cation pocket.

The protein belongs to the Cu-Zn superoxide dismutase family. Homodimer. Cu cation serves as cofactor. Requires Zn(2+) as cofactor.

The protein resides in the periplasm. It catalyses the reaction 2 superoxide + 2 H(+) = H2O2 + O2. Its function is as follows. Destroys radicals which are normally produced within the cells and which are toxic to biological systems. May function against extracytoplasmic toxic oxygen species. In Caulobacter vibrioides (strain ATCC 19089 / CIP 103742 / CB 15) (Caulobacter crescentus), this protein is Superoxide dismutase [Cu-Zn] (sodC).